A 96-amino-acid polypeptide reads, in one-letter code: Co-chaperonin GroES (96 aa).

The protein belongs to the GroES chaperonin family. In terms of assembly, heptamer of 7 subunits arranged in a ring. Interacts with the chaperonin GroEL.

It localises to the cytoplasm. Functionally, together with the chaperonin GroEL, plays an essential role in assisting protein folding. The GroEL-GroES system forms a nano-cage that allows encapsulation of the non-native substrate proteins and provides a physical environment optimized to promote and accelerate protein folding. GroES binds to the apical surface of the GroEL ring, thereby capping the opening of the GroEL channel. This is Co-chaperonin GroES from Buchnera aphidicola subsp. Acyrthosiphon pisum (strain 5A).